A 58-amino-acid chain; its full sequence is Amyloid-beta precursor protein (58 aa).

Residues 1–34 (ISEVKMDAEFRHDSGYEVHHQKLVFFAEDVGSNK) are Extracellular-facing. Residues histidine 12, tyrosine 16, histidine 19, and histidine 20 each coordinate Cu(2+). The Zn(2+) site is built by histidine 12, tyrosine 16, histidine 19, and histidine 20. A helical membrane pass occupies residues 35–58 (GAIIGLMVGGVVIATVIVITLVML).

It belongs to the APP family. As to quaternary structure, binds, via its C-terminus, to the PID domain of several cytoplasmic proteins, including APBB family members, the APBA family, MAPK8IP1, SHC1 and NUMB and DAB1. Binding to DAB1 inhibits its serine phosphorylation. Interacts (via NPXY motif) with DAB2 (via PID domain); the interaction is impaired by tyrosine phosphorylation of the NPXY motif. Also interacts with GPCR-like protein BPP, APPBP1, IB1, KNS2 (via its TPR domains), APPBP2 (via BaSS) and DDB1. In vitro, it binds MAPT via the MT-binding domains. Associates with microtubules in the presence of ATP and in a kinesin-dependent manner. Interacts, through a C-terminal domain, with GNAO1. Interacts with CPEB1, ANKS1B and AGER. Interacts with ITM2B. Interacts with ITM2C. Interacts with IDE. Can form homodimers; dimerization is enhanced in the presence of Cu(2+) ions. Can form homodimers; this is promoted by heparin binding. Interacts with SORL1 (via N-terminal ectodomain); this interaction retains APP in the trans-Golgi network and reduces processing into soluble APP-alpha and amyloid-beta peptides. Interacts with PLD3. Interacts with VDAC1. Interacts with NSG1; could regulate APP processing. Amyloid-beta protein 42 interacts with FPR2. Interacts with LRRK2. Interacts (via cytoplasmic domain) with KIF5B. Interacts (via C-terminus) with APBB2/FE65L1 (via C-terminus). Interacts (via intracellular domain) with APBB3. Proteolytically processed under normal cellular conditions. Cleavage either by alpha-secretase, beta-secretase or theta-secretase leads to generation and extracellular release of soluble APP peptides, S-APP-alpha and S-APP-beta, and the retention of corresponding membrane-anchored C-terminal fragments, C80, C83 and C99. Subsequent processing of C80 and C83 by gamma-secretase yields P3 peptides. This is the major secretory pathway and is non-amyloidogenic. Alternatively, presenilin/nicastrin-mediated gamma-secretase processing of C99 releases the amyloid-beta proteins, amyloid-beta protein 40 and amyloid-beta protein 42, major components of amyloid plaques, and the cytotoxic C-terminal fragments, gamma-CTF(50), gamma-CTF(57) and gamma-CTF(59). PSEN1 cleavage is more efficient with C83 than with C99 as substrate (in vitro). Amyloid-beta protein 40 and Amyloid-beta protein 42 are cleaved by ACE. Many other minor amyloid-beta peptides, amyloid-beta 1-X peptides, are found in cerebral spinal fluid (CSF) including the amyloid-beta X-15 peptides, produced from the cleavage by alpha-secretase.

It is found in the cell membrane. The protein resides in the membrane. It localises to the perikaryon. Its subcellular location is the cell projection. The protein localises to the growth cone. It is found in the clathrin-coated pit. The protein resides in the early endosome. It localises to the cytoplasmic vesicle. Its subcellular location is the secreted. The protein localises to the cell surface. It is found in the nucleus. The protein resides in the cytoplasm. Functions as a cell surface receptor and performs physiological functions on the surface of neurons relevant to neurite growth, neuronal adhesion and axonogenesis. Interaction between APP molecules on neighboring cells promotes synaptogenesis. Involved in cell mobility and transcription regulation through protein-protein interactions. Can promote transcription activation through binding to APBB1-KAT5 and inhibit Notch signaling through interaction with Numb. Couples to apoptosis-inducing pathways such as those mediated by G(o) and JIP. Inhibits G(o)-alpha ATPase activity. Acts as a kinesin I membrane receptor, mediating the axonal transport of beta-secretase and presenilin 1. By acting as a kinesin I membrane receptor, plays a role in axonal anterograde transport of cargo towards synapses in axons. May be involved in copper homeostasis/oxidative stress through copper ion reduction. In vitro, copper-metallated APP induces neuronal death directly or is potentiated through Cu(2+)-mediated low-density lipoprotein oxidation. Can regulate neurite outgrowth through binding to components of the extracellular matrix such as heparin and collagen I and IV. Induces a AGER-dependent pathway that involves activation of p38 MAPK, resulting in internalization of amyloid-beta peptide and mitochondrial dysfunction in cultured cortical neurons. Provides Cu(2+) ions for GPC1 which are required for release of nitric oxide (NO) and subsequent degradation of the heparan sulfate chains on GPC1. This chain is Amyloid-beta precursor protein (APP), found in Canis lupus familiaris (Dog).